The chain runs to 254 residues: HTH-type transcriptional regulator GlvR (254 aa).

In terms of domain architecture, HTH rpiR-type spans 1-77 (MQLEELINQH…VFLKWEDQPE (77 aa)). Residues 37-56 (IDALAKACSVSRSSILRLAQ) constitute a DNA-binding region (H-T-H motif). The SIS domain maps to 106–248 (MCQLIDAADR…FRAYVDYKEA (143 aa)).

Positive regulator of the glv operon expression, which consists of GlvA, GlvR and GlvC. This chain is HTH-type transcriptional regulator GlvR (glvR), found in Bacillus subtilis (strain 168).